Consider the following 338-residue polypeptide: Solute carrier family 35 member G3 (338 aa).

The segment at 1–24 (MAGSHPYFNQPDSTHPSPPSAPPS) is disordered. Helical transmembrane passes span 37-57 (TSGLLVALLGGGLPAGFVGPL), 67-87 (LPSLELLIWRCLFHLPIALLL), 105-125 (FFCALLNILSIGCAYSAVQVV), 160-180 (CGLLGCILGLIIIVGPGLWTL), 190-210 (ALGYAEAFLGGRALSLGLLVY), 221-241 (TVAFLSGLVGLLGSVPGLFVL), 250-270 (LLSWSCVGAVGILALVSFTCV), 281-301 (LVCAVLHSEVVVALILQYYML), and 305-325 (VAPSDIMGAGVALGSIAIITA). In terms of domain architecture, EamA 1 spans 49–174 (LPAGFVGPLS…CILGLIIIVG (126 aa)). The EamA 2 domain occupies 272-325 (YAVTKAHPALVCAVLHSEVVVALILQYYMLHETVAPSDIMGAGVALGSIAIITA).

It belongs to the SLC35G solute transporter family.

The protein resides in the membrane. In Pan paniscus (Pygmy chimpanzee), this protein is Solute carrier family 35 member G3 (SLC35G3).